Here is a 617-residue protein sequence, read N- to C-terminus: 1-deoxy-D-xylulose-5-phosphate synthase (617 aa).

Thiamine diphosphate-binding positions include His-76 and 117-119 (GHS). Asp-148 contacts Mg(2+). Thiamine diphosphate contacts are provided by residues 149-150 (GA), Asn-177, Tyr-285, and Glu-366. Asn-177 provides a ligand contact to Mg(2+).

Belongs to the transketolase family. DXPS subfamily. In terms of assembly, homodimer. The cofactor is Mg(2+). Thiamine diphosphate is required as a cofactor.

It carries out the reaction D-glyceraldehyde 3-phosphate + pyruvate + H(+) = 1-deoxy-D-xylulose 5-phosphate + CO2. The protein operates within metabolic intermediate biosynthesis; 1-deoxy-D-xylulose 5-phosphate biosynthesis; 1-deoxy-D-xylulose 5-phosphate from D-glyceraldehyde 3-phosphate and pyruvate: step 1/1. Catalyzes the acyloin condensation reaction between C atoms 2 and 3 of pyruvate and glyceraldehyde 3-phosphate to yield 1-deoxy-D-xylulose-5-phosphate (DXP). In Mannheimia succiniciproducens (strain KCTC 0769BP / MBEL55E), this protein is 1-deoxy-D-xylulose-5-phosphate synthase.